We begin with the raw amino-acid sequence, 331 residues long: Pseudouridylate synthase TRUB2, mitochondrial (331 aa).

The active-site Nucleophile is D98. The tract at residues 309-331 (STGQPWGLKDPSSTLELESCSGQ) is disordered. Residues 319–331 (PSSTLELESCSGQ) are compositionally biased toward polar residues.

The protein belongs to the pseudouridine synthase TruB family. As to quaternary structure, forms a regulatory protein-RNA complex, consisting of RCC1L, NGRN, RPUSD3, RPUSD4, TRUB2, FASTKD2 and 16S mt-rRNA.

Its subcellular location is the mitochondrion matrix. The catalysed reaction is a uridine in mRNA = a pseudouridine in mRNA. It carries out the reaction uridine(55) in tRNA = pseudouridine(55) in tRNA. Functionally, minor enzyme contributing to the isomerization of uridine to pseudouridine (pseudouridylation) of specific mitochondrial mRNAs (mt-mRNAs) such as COXI and COXIII mt-mRNAs. As a component of a functional protein-RNA module, consisting of RCC1L, NGRN, RPUSD3, RPUSD4, TRUB2, FASTKD2 and 16S mitochondrial ribosomal RNA (16S mt-rRNA), controls 16S mt-rRNA abundance and is required for intra-mitochondrial translation. Also catalyzes pseudouridylation of some tRNAs, including synthesis of pseudouridine(55) from uracil-55, in the psi GC loop of a subset of tRNAs. The protein is Pseudouridylate synthase TRUB2, mitochondrial of Mus musculus (Mouse).